We begin with the raw amino-acid sequence, 303 residues long: Putative F-box protein At5g62060 (303 aa).

In terms of domain architecture, F-box spans 27 to 74; the sequence is KSRYIDIPLDITVEILKKLPAKSLVRFQCVSKQWSTIIGSRRDFIDSI.

The chain is Putative F-box protein At5g62060 from Arabidopsis thaliana (Mouse-ear cress).